Reading from the N-terminus, the 90-residue chain is Small ribosomal subunit protein bS16 (90 aa).

The protein belongs to the bacterial ribosomal protein bS16 family.

The polypeptide is Small ribosomal subunit protein bS16 (Lactococcus lactis subsp. cremoris (strain SK11)).